The chain runs to 37 residues: DEEPKESCSDEMCVIYCKGEEYSTGVCDGPQKCKCSD.

3 disulfides stabilise this stretch: Cys-8–Cys-27, Cys-13–Cys-33, and Cys-17–Cys-35.

Belongs to the short scorpion toxin superfamily. Potassium channel inhibitor family. Alpha-KTx 11 subfamily. As to expression, expressed by the venom gland.

The protein resides in the secreted. Functionally, binds and inhibits voltage-sensitive potassium channels. Inhibits the vertebrate potassium channels Kv1.1/KCNA1, Kv1.2/KCNA2 and Kv1.3/KCNA3 with low affinity. Also weakly inhibits Kv7.1/KCNQ1 (10 uM of the toxin inhibits currents by 21.43%). The polypeptide is Potassium channel toxin alpha-KTx 11.1 (Parabuthus villosus (Black hairy thick-tailed scorpion)).